Here is a 225-residue protein sequence, read N- to C-terminus: NAD(P)H-quinone oxidoreductase subunit K, chloroplastic (225 aa).

C43, C44, C108, and C139 together coordinate [4Fe-4S] cluster.

This sequence belongs to the complex I 20 kDa subunit family. As to quaternary structure, NDH is composed of at least 16 different subunits, 5 of which are encoded in the nucleus. Requires [4Fe-4S] cluster as cofactor.

The protein resides in the plastid. Its subcellular location is the chloroplast thylakoid membrane. It carries out the reaction a plastoquinone + NADH + (n+1) H(+)(in) = a plastoquinol + NAD(+) + n H(+)(out). The catalysed reaction is a plastoquinone + NADPH + (n+1) H(+)(in) = a plastoquinol + NADP(+) + n H(+)(out). Its function is as follows. NDH shuttles electrons from NAD(P)H:plastoquinone, via FMN and iron-sulfur (Fe-S) centers, to quinones in the photosynthetic chain and possibly in a chloroplast respiratory chain. The immediate electron acceptor for the enzyme in this species is believed to be plastoquinone. Couples the redox reaction to proton translocation, and thus conserves the redox energy in a proton gradient. In Solanum bulbocastanum (Wild potato), this protein is NAD(P)H-quinone oxidoreductase subunit K, chloroplastic.